The following is a 134-amino-acid chain: MKPSERRKARRLAVQAIYSWQLSGNNIADVEHEFLTEQKIDGIDVTYFRELLSGTATKQAQIDELITPHIERPYDEVSPIEKAVLRLATYELTFRKDVPYKVAINEAIELAKAFGAEDGHKFVNGILDKIVGRK.

The protein belongs to the NusB family.

Functionally, involved in transcription antitermination. Required for transcription of ribosomal RNA (rRNA) genes. Binds specifically to the boxA antiterminator sequence of the ribosomal RNA (rrn) operons. The protein is Transcription antitermination protein NusB of Shewanella woodyi (strain ATCC 51908 / MS32).